The following is a 528-amino-acid chain: Phosphoenolpyruvate carboxykinase (ATP) (528 aa).

3 residues coordinate substrate: Arg-56, Tyr-192, and Lys-198. Residues Lys-198, His-217, and 233–241 contribute to the ATP site; that span reads GLSGTGKTT. 2 residues coordinate Mn(2+): Lys-198 and His-217. Residue Asp-254 coordinates Mn(2+). ATP contacts are provided by Glu-282, Arg-319, and Thr-444. Arg-319 contributes to the substrate binding site.

It belongs to the phosphoenolpyruvate carboxykinase (ATP) family. Mn(2+) is required as a cofactor.

The protein resides in the cytoplasm. It catalyses the reaction oxaloacetate + ATP = phosphoenolpyruvate + ADP + CO2. It functions in the pathway carbohydrate biosynthesis; gluconeogenesis. Its function is as follows. Involved in the gluconeogenesis. Catalyzes the conversion of oxaloacetate (OAA) to phosphoenolpyruvate (PEP) through direct phosphoryl transfer between the nucleoside triphosphate and OAA. This chain is Phosphoenolpyruvate carboxykinase (ATP), found in Bacillus cereus (strain B4264).